The primary structure comprises 263 residues: Small ribosomal subunit protein eS4 (263 aa).

The S4 RNA-binding domain occupies leucine 42–aspartate 104.

Belongs to the eukaryotic ribosomal protein eS4 family.

The protein is Small ribosomal subunit protein eS4 (RPS4) of Bos taurus (Bovine).